Consider the following 439-residue polypeptide: Ribosomal protein uS12 methylthiotransferase RimO (439 aa).

The MTTase N-terminal domain occupies 7-122; it reads QTIAVIALGC…LPDLVFGKNF (116 aa). [4Fe-4S] cluster is bound by residues cysteine 16, cysteine 52, cysteine 85, cysteine 155, cysteine 159, and cysteine 162. The region spanning 141–369 is the Radical SAM core domain; the sequence is SSTIPSAYLK…NAQYNIFQAK (229 aa).

The protein belongs to the methylthiotransferase family. RimO subfamily. Requires [4Fe-4S] cluster as cofactor.

The protein resides in the cytoplasm. The enzyme catalyses L-aspartate(89)-[ribosomal protein uS12]-hydrogen + (sulfur carrier)-SH + AH2 + 2 S-adenosyl-L-methionine = 3-methylsulfanyl-L-aspartate(89)-[ribosomal protein uS12]-hydrogen + (sulfur carrier)-H + 5'-deoxyadenosine + L-methionine + A + S-adenosyl-L-homocysteine + 2 H(+). Its function is as follows. Catalyzes the methylthiolation of an aspartic acid residue of ribosomal protein uS12. In Endomicrobium trichonymphae, this protein is Ribosomal protein uS12 methylthiotransferase RimO.